Reading from the N-terminus, the 521-residue chain is Glutamate--cysteine ligase (521 aa).

It belongs to the glutamate--cysteine ligase type 1 family. Type 1 subfamily.

It carries out the reaction L-cysteine + L-glutamate + ATP = gamma-L-glutamyl-L-cysteine + ADP + phosphate + H(+). It participates in sulfur metabolism; glutathione biosynthesis; glutathione from L-cysteine and L-glutamate: step 1/2. This chain is Glutamate--cysteine ligase (gshA), found in Buchnera aphidicola subsp. Baizongia pistaciae (strain Bp).